A 198-amino-acid chain; its full sequence is Single-stranded DNA cytosine deaminase (198 aa).

The Bipartite nuclear localization signal motif lies at 1–30; that stretch reads MDSLLMKQKKFLYHFKNVRWAKGRHETYLC. Positions 2 to 26 are interaction with SUPT6H; the sequence is DSLLMKQKKFLYHFKNVRWAKGRHE. A CMP/dCMP-type deaminase domain is found at 23-129; the sequence is GRHETYLCYV…KAEPEGLRRL (107 aa). Residue threonine 27 is modified to Phosphothreonine; by PKA. Serine 38 is subject to Phosphoserine; by PKA. The important for interaction with CTNNBL1 stretch occupies residues 39–42; it reads ATSC. Histidine 56 is a binding site for Zn(2+). Catalysis depends on glutamate 58, which acts as the Proton donor. Residues cysteine 87 and cysteine 90 each contribute to the Zn(2+) site. Residues 88–116 form a required for interaction with RNF126 region; the sequence is YDCARHVAEFLRWNPNLSLRIFTARLYFC. The short motif at 183–198 is the Nuclear export signal element; sequence LYEVDDLRDAFRMLGF.

This sequence belongs to the cytidine and deoxycytidylate deaminase family. As to quaternary structure, interacts with CTNNBL1; the interaction is important for the immunoglobulin switch activity of AICDA. Interacts (via its NLS) with KPNA1. Interacts with PKA/PRKACA and PRKAR1A/PKR1. Interacts with SUPT6H, TRIM28 and NCL. Directly interacts with MCM3AP/GANP; this interaction may favor AICDA recruitment to immunoglobulin variable region genes, hence promoting somatic hypermutations. Zn(2+) is required as a cofactor. In terms of processing, ser-38 is the major site whereas Thr-27 is the minor site of phosphorylation. Phosphorylation regulates its class-switch recombination activity. Probably monoubiquitinated on several residues by RNF126. As to expression, expressed in germinal center B-cells (at protein level).

Its subcellular location is the nucleus. It localises to the cytoplasm. The enzyme catalyses a 2'-deoxycytidine in single-stranded DNA + H2O + H(+) = a 2'-deoxyuridine in single-stranded DNA + NH4(+). Single-stranded DNA-specific cytidine deaminase. Involved in somatic hypermutation (SHM), gene conversion, and class-switch recombination (CSR) in B-lymphocytes by deaminating C to U during transcription of Ig-variable (V) and Ig-switch (S) region DNA. Required for several crucial steps of B-cell terminal differentiation necessary for efficient antibody responses. May also play a role in the epigenetic regulation of gene expression by participating in DNA demethylation. The polypeptide is Single-stranded DNA cytosine deaminase (Aicda) (Mus musculus (Mouse)).